The sequence spans 162 residues: Austinoid biosynthesis clusters protein J (162 aa).

It belongs to the trt14 isomerase family. Homodimer.

It participates in secondary metabolite biosynthesis; terpenoid biosynthesis. Part of the gene cluster B that mediates the biosynthesis of austinol and dehydroaustinol, two fungal meroterpenoids. The first step of the pathway is the synthesis of 3,5-dimethylorsellinic acid by the polyketide synthase ausA. 3,5-dimethylorsellinic acid is then prenylated by the polyprenyl transferase ausN. Further epoxidation by the FAD-dependent monooxygenase ausM and cyclization by the probable terpene cyclase ausL lead to the formation of protoaustinoid A. Protoaustinoid A is then oxidized to spiro-lactone preaustinoid A3 by the combined action of the FAD-binding monooxygenases ausB and ausC, and the dioxygenase ausE. Acid-catalyzed keto-rearrangement and ring contraction of the tetraketide portion of preaustinoid A3 by ausJ lead to the formation of preaustinoid A4. The aldo-keto reductase ausK, with the help of ausH, is involved in the next step by transforming preaustinoid A4 into isoaustinone which is in turn hydroxylated by the P450 monooxygenase ausI to form austinolide. Finally, the cytochrome P450 monooxygenase ausG modifies austinolide to austinol. Austinol can be further modified to dehydroaustinol which forms a diffusible complex with diorcinol that initiates conidiation. Due to genetic rearrangements of the clusters and the subsequent loss of some enzymes, the end products of the Emericella nidulans austinoid biosynthesis clusters are austinol and dehydroaustinol, even if additional enzymes, such as the O-acetyltransferase ausQ and the cytochrome P450 monooxygenase ausR are still functional. The polypeptide is Austinoid biosynthesis clusters protein J (Emericella nidulans (strain FGSC A4 / ATCC 38163 / CBS 112.46 / NRRL 194 / M139) (Aspergillus nidulans)).